We begin with the raw amino-acid sequence, 530 residues long: ATP synthase subunit alpha (530 aa).

169–176 is a binding site for ATP; the sequence is GDRQTGKT.

The protein belongs to the ATPase alpha/beta chains family. F-type ATPases have 2 components, CF(1) - the catalytic core - and CF(0) - the membrane proton channel. CF(1) has five subunits: alpha(3), beta(3), gamma(1), delta(1), epsilon(1). CF(0) has three main subunits: a(1), b(2) and c(9-12). The alpha and beta chains form an alternating ring which encloses part of the gamma chain. CF(1) is attached to CF(0) by a central stalk formed by the gamma and epsilon chains, while a peripheral stalk is formed by the delta and b chains.

It is found in the cell membrane. The enzyme catalyses ATP + H2O + 4 H(+)(in) = ADP + phosphate + 5 H(+)(out). In terms of biological role, produces ATP from ADP in the presence of a proton gradient across the membrane. The alpha chain is a regulatory subunit. The polypeptide is ATP synthase subunit alpha (Mycoplasmopsis synoviae (strain 53) (Mycoplasma synoviae)).